The sequence spans 256 residues: Probable transcriptional regulatory protein A1I_03240 (256 aa).

A disordered region spans residues 1–21 (MAGHSKFKNIQHRKGAQDKKR).

The protein belongs to the TACO1 family.

It is found in the cytoplasm. The protein is Probable transcriptional regulatory protein A1I_03240 of Rickettsia bellii (strain OSU 85-389).